Reading from the N-terminus, the 238-residue chain is MEKRQELYAGKAKSVFRTDDPDKMVLVFRDDTSAFDGKRIEQLDRKGMVNNKFNAFIMTKLQEAGIPTHFEKLLSDTESLVKCLDMIPVECVVRNVAAGSLCRRLGVEEGITLTPPTFELFLKNDALGDPMINESHVESFGWAKASDLAKAKELTFKVNDVLKAIFAEGGMILVDYKLEFGLYKGEVLLGDEFSPDGCRLWDAKTKEKLDKDRFRQGLGGVIEAYEDVGRRIGIDFDA.

This sequence belongs to the SAICAR synthetase family.

The enzyme catalyses 5-amino-1-(5-phospho-D-ribosyl)imidazole-4-carboxylate + L-aspartate + ATP = (2S)-2-[5-amino-1-(5-phospho-beta-D-ribosyl)imidazole-4-carboxamido]succinate + ADP + phosphate + 2 H(+). Its pathway is purine metabolism; IMP biosynthesis via de novo pathway; 5-amino-1-(5-phospho-D-ribosyl)imidazole-4-carboxamide from 5-amino-1-(5-phospho-D-ribosyl)imidazole-4-carboxylate: step 1/2. The polypeptide is Phosphoribosylaminoimidazole-succinocarboxamide synthase (Marinomonas sp. (strain MWYL1)).